We begin with the raw amino-acid sequence, 465 residues long: Iron-sulfur cluster assembly SufBD family protein SSP1857 (465 aa).

It belongs to the iron-sulfur cluster assembly SufBD family.

This chain is Iron-sulfur cluster assembly SufBD family protein SSP1857, found in Staphylococcus saprophyticus subsp. saprophyticus (strain ATCC 15305 / DSM 20229 / NCIMB 8711 / NCTC 7292 / S-41).